A 412-amino-acid polypeptide reads, in one-letter code: MISQIDKAELLERFLHYVSFHTQSKPNAKHSPSSVGQMKLAMQLQKELIQLGLENVEVSKYAVVTAFLPANDPNLTKTIGLVAHLDTSPQCSGKNVRPEVIEEYRGGDIALGIGEEFISPVYYSFMQKLVGQTLIVTDGTTLLGADNKAGIAEIMTALSILQKENIPHCNIRVAFTPDEEIGLGIHYFPMEKFSCDWAYTIDGGEVGELEYENFNAATAKVRFFGRNIHTGYAKGKMLNALTLACEFQQVFPVDEVPEKTDGKAGFYHLEDFSGDIEQVELTYLIRDFDEQNFAQRKAFIKNQVEKFNAKKGLKKPIELEIQDSYQNMYDVVKNVPQSIELADRAMKAVGIKPNHKPIRGGTDGAFLASKGLACPNIFTGGYNFHSKHELVSLQGMENTVQVIIEMLKCKDL.

Zn(2+) is bound at residue histidine 84. Aspartate 86 is an active-site residue. Residue aspartate 146 coordinates Zn(2+). Glutamate 179 acts as the Proton acceptor in catalysis. Residues glutamate 180, aspartate 202, and histidine 385 each contribute to the Zn(2+) site.

This sequence belongs to the peptidase M20B family. Zn(2+) is required as a cofactor.

It localises to the cytoplasm. It catalyses the reaction Release of the N-terminal residue from a tripeptide.. In terms of biological role, cleaves the N-terminal amino acid of tripeptides. The chain is Peptidase T from Haemophilus influenzae (strain 86-028NP).